A 68-amino-acid polypeptide reads, in one-letter code: UPF0435 protein Sca_1453 (68 aa).

Belongs to the UPF0435 family.

In Staphylococcus carnosus (strain TM300), this protein is UPF0435 protein Sca_1453.